A 134-amino-acid chain; its full sequence is UPF0412 protein YaaI (134 aa).

Residues 1–23 (MRSVLTISAGLLFGLALSSVAHA) form the signal peptide.

This sequence belongs to the UPF0412 family.

The sequence is that of UPF0412 protein YaaI from Salmonella agona (strain SL483).